Reading from the N-terminus, the 289-residue chain is Nucleotide-binding protein CHY_0272 (289 aa).

8–15 (GLSGAGKT) is a binding site for ATP. 59-62 (DVRG) serves as a coordination point for GTP.

Belongs to the RapZ-like family.

Functionally, displays ATPase and GTPase activities. In Carboxydothermus hydrogenoformans (strain ATCC BAA-161 / DSM 6008 / Z-2901), this protein is Nucleotide-binding protein CHY_0272.